Consider the following 345-residue polypeptide: Phosphate acyltransferase (345 aa).

The protein belongs to the PlsX family. Homodimer. Probably interacts with PlsY.

It is found in the cytoplasm. It catalyses the reaction a fatty acyl-[ACP] + phosphate = an acyl phosphate + holo-[ACP]. Its pathway is lipid metabolism; phospholipid metabolism. Its function is as follows. Catalyzes the reversible formation of acyl-phosphate (acyl-PO(4)) from acyl-[acyl-carrier-protein] (acyl-ACP). This enzyme utilizes acyl-ACP as fatty acyl donor, but not acyl-CoA. This chain is Phosphate acyltransferase, found in Trichlorobacter lovleyi (strain ATCC BAA-1151 / DSM 17278 / SZ) (Geobacter lovleyi).